The chain runs to 505 residues: Probable alpha-L-arabinofuranosidase C (505 aa).

Asn-81, Asn-152, Asn-269, and Asn-438 each carry an N-linked (GlcNAc...) asparagine glycan.

This sequence belongs to the glycosyl hydrolase 51 family.

It localises to the secreted. It carries out the reaction Hydrolysis of terminal non-reducing alpha-L-arabinofuranoside residues in alpha-L-arabinosides.. It functions in the pathway glycan metabolism; L-arabinan degradation. Its function is as follows. Alpha-L-arabinofuranosidase involved in the degradation of arabinoxylan, a major component of plant hemicellulose. Acts only on small linear 1,5-alpha-linked L-arabinofuranosyl oligosaccharides. The protein is Probable alpha-L-arabinofuranosidase C (abfC) of Aspergillus fumigatus (strain ATCC MYA-4609 / CBS 101355 / FGSC A1100 / Af293) (Neosartorya fumigata).